The following is a 476-amino-acid chain: 23S rRNA (uracil(1939)-C(5))-methyltransferase RlmD (476 aa).

The 55-residue stretch at 1–55 (MVDEVLKIESLDLEARGIARRDGKVVFVEGALPGERVYAATVRRKPSYEIARVET) folds into the TRAM domain. 4 residues coordinate [4Fe-4S] cluster: Cys-68, Cys-74, Cys-77, and Cys-156. Gln-265, Phe-294, Asn-299, Glu-315, Asn-343, and Asp-364 together coordinate S-adenosyl-L-methionine. The Nucleophile role is filled by Cys-394.

The protein belongs to the class I-like SAM-binding methyltransferase superfamily. RNA M5U methyltransferase family. RlmD subfamily.

It carries out the reaction uridine(1939) in 23S rRNA + S-adenosyl-L-methionine = 5-methyluridine(1939) in 23S rRNA + S-adenosyl-L-homocysteine + H(+). Its function is as follows. Catalyzes the formation of 5-methyl-uridine at position 1939 (m5U1939) in 23S rRNA. The sequence is that of 23S rRNA (uracil(1939)-C(5))-methyltransferase RlmD from Bordetella avium (strain 197N).